The chain runs to 101 residues: NADH-quinone oxidoreductase subunit K (101 aa).

A run of 3 helical transmembrane segments spans residues 4–24 (LGHM…GIFL), 30–50 (IVLL…FVGF), and 62–82 (FVFF…AILV).

It belongs to the complex I subunit 4L family. As to quaternary structure, NDH-1 is composed of 14 different subunits. Subunits NuoA, H, J, K, L, M, N constitute the membrane sector of the complex.

It localises to the cell inner membrane. The catalysed reaction is a quinone + NADH + 5 H(+)(in) = a quinol + NAD(+) + 4 H(+)(out). In terms of biological role, NDH-1 shuttles electrons from NADH, via FMN and iron-sulfur (Fe-S) centers, to quinones in the respiratory chain. The immediate electron acceptor for the enzyme in this species is believed to be ubiquinone. Couples the redox reaction to proton translocation (for every two electrons transferred, four hydrogen ions are translocated across the cytoplasmic membrane), and thus conserves the redox energy in a proton gradient. In Stenotrophomonas maltophilia (strain K279a), this protein is NADH-quinone oxidoreductase subunit K.